A 152-amino-acid polypeptide reads, in one-letter code: Deoxyuridine 5'-triphosphate nucleotidohydrolase (152 aa).

Residues 71–73 (RSG), asparagine 84, 88–90 (LID), and methionine 98 contribute to the substrate site.

This sequence belongs to the dUTPase family. Requires Mg(2+) as cofactor.

The catalysed reaction is dUTP + H2O = dUMP + diphosphate + H(+). It functions in the pathway pyrimidine metabolism; dUMP biosynthesis; dUMP from dCTP (dUTP route): step 2/2. Functionally, this enzyme is involved in nucleotide metabolism: it produces dUMP, the immediate precursor of thymidine nucleotides and it decreases the intracellular concentration of dUTP so that uracil cannot be incorporated into DNA. This chain is Deoxyuridine 5'-triphosphate nucleotidohydrolase, found in Shewanella pealeana (strain ATCC 700345 / ANG-SQ1).